We begin with the raw amino-acid sequence, 281 residues long: 3-hydroxyanthranilate 3,4-dioxygenase (281 aa).

Residues 1–162 form a domain A (catalytic) region; the sequence is MAGVTAIEIP…SNEFKTGKPG (162 aa). Position 45 (R45) interacts with O2. Positions 49, 55, and 93 each coordinate Fe cation. E55 contacts substrate. The substrate site is built by R97 and E107. Residues 163-179 are linker; the sequence is KGTFACNAPYEARWTDL. Residues 180–281 form a domain B region; the sequence is PVPINRKEFI…GFAITIRMPG (102 aa).

This sequence belongs to the 3-HAO family. The cofactor is Fe(2+).

It is found in the cytoplasm. The catalysed reaction is 3-hydroxyanthranilate + O2 = (2Z,4Z)-2-amino-3-carboxymuconate 6-semialdehyde. It participates in cofactor biosynthesis; NAD(+) biosynthesis; quinolinate from L-kynurenine: step 3/3. In terms of biological role, catalyzes the oxidative ring opening of 3-hydroxyanthranilate to 2-amino-3-carboxymuconate semialdehyde, which spontaneously cyclizes to quinolinate. In Caenorhabditis briggsae, this protein is 3-hydroxyanthranilate 3,4-dioxygenase (haao-1).